A 207-amino-acid chain; its full sequence is 3-demethoxyubiquinol 3-hydroxylase (207 aa).

Residues 22-32 (ERANPADRLAP) show a composition bias toward basic and acidic residues. The interval 22-41 (ERANPADRLAPETEQMNPEE) is disordered. Residues Glu-56, Glu-86, His-89, Glu-138, Glu-170, and His-173 each coordinate Fe cation.

Belongs to the COQ7 family. Requires Fe cation as cofactor.

The protein resides in the cell membrane. It carries out the reaction a 5-methoxy-2-methyl-3-(all-trans-polyprenyl)benzene-1,4-diol + AH2 + O2 = a 3-demethylubiquinol + A + H2O. Its pathway is cofactor biosynthesis; ubiquinone biosynthesis. Catalyzes the hydroxylation of 2-nonaprenyl-3-methyl-6-methoxy-1,4-benzoquinol during ubiquinone biosynthesis. This chain is 3-demethoxyubiquinol 3-hydroxylase, found in Cupriavidus metallidurans (strain ATCC 43123 / DSM 2839 / NBRC 102507 / CH34) (Ralstonia metallidurans).